The sequence spans 261 residues: Succinate dehydrogenase iron-sulfur subunit (261 aa).

The 2Fe-2S ferredoxin-type domain maps to 28–119 (RKVQVYRYDP…DIKIYPLPHM (92 aa)). Residues cysteine 80, cysteine 85, and cysteine 100 each coordinate [2Fe-2S] cluster. Positions 161-191 (DREKLDGLYECILCACCSTSCPSYWWNSDKY) constitute a 4Fe-4S ferredoxin-type domain. 3 residues coordinate [4Fe-4S] cluster: cysteine 171, cysteine 174, and cysteine 177. Cysteine 181 contacts [3Fe-4S] cluster. Tryptophan 186 serves as a coordination point for a ubiquinone. The [3Fe-4S] cluster site is built by cysteine 228 and cysteine 234. Residue cysteine 238 coordinates [4Fe-4S] cluster.

The protein belongs to the succinate dehydrogenase/fumarate reductase iron-sulfur protein family. As to quaternary structure, part of an enzyme complex containing four subunits: a flavoprotein, an iron-sulfur, cytochrome b-556, and a hydrophobic anchor protein. [2Fe-2S] cluster is required as a cofactor. It depends on [3Fe-4S] cluster as a cofactor. [4Fe-4S] cluster serves as cofactor.

It carries out the reaction a quinone + succinate = fumarate + a quinol. It functions in the pathway carbohydrate metabolism; tricarboxylic acid cycle; fumarate from succinate (bacterial route): step 1/1. The sequence is that of Succinate dehydrogenase iron-sulfur subunit (sdhB) from Rickettsia typhi (strain ATCC VR-144 / Wilmington).